The following is a 193-amino-acid chain: MARNANITRETKETKIEVFLDIDRKGEIKVSTPVPFFNHMLITLLTYMNSTATVSATDKLPYDDHHIIEDVAITLGLAIKEALGDKRGIKRFSHQIIPMDEALVLVSLDISNRGIAFVNLNLKRSEIGGLATENIPHFFQSFAYNSGVTLHISQLSGYNTHHIIEASFKALGLALYEATRIVDNEIRSTKGVI.

This sequence belongs to the imidazoleglycerol-phosphate dehydratase family.

The protein localises to the cytoplasm. The enzyme catalyses D-erythro-1-(imidazol-4-yl)glycerol 3-phosphate = 3-(imidazol-4-yl)-2-oxopropyl phosphate + H2O. It functions in the pathway amino-acid biosynthesis; L-histidine biosynthesis; L-histidine from 5-phospho-alpha-D-ribose 1-diphosphate: step 6/9. The sequence is that of Imidazoleglycerol-phosphate dehydratase from Saccharolobus islandicus (strain M.14.25 / Kamchatka #1) (Sulfolobus islandicus).